The following is a 153-amino-acid chain: ORM1-like protein 3 (153 aa).

Residues 1 to 17 (MNVGTAHSEVNPNTRVM) form an important for ceramide level-sensing region. At 1–21 (MNVGTAHSEVNPNTRVMNSRG) the chain is on the cytoplasmic side. 2 helical membrane passes run 22-44 (IWLS…PFVS) and 45-63 (VPVV…MYIF). Residues 64 to 100 (LHTVKGTPFETPDQGKARLLTHWEQMDYGVQFTASRK) lie on the Cytoplasmic side of the membrane. A helical transmembrane segment spans residues 101–117 (FLTITPIVLYFLTSFYT). Residues 118–121 (KYDQ) are Lumenal-facing. The chain crosses the membrane as a helical span at residues 122–139 (IHFVLNTVSLMSVLIPKL). A Hydroxyproline modification is found at Pro137. Over 140 to 153 (PQLHGVRIFGINKY) the chain is Cytoplasmic.

The protein belongs to the ORM family. As to quaternary structure, ceramide-sensitive subunit of the serine palmitoyltransferase (SPT) complex, which is also composed of SPTLC1, SPTLC2/3 and SPTSSA/B. In terms of processing, when hydroxylated at Pro-137, ubiquitinated via 'Lys-48'-linkage, leading to proteasomal degradation. In endothelial cells, ORMDL3 proteasomal degradation is controlled by the sphingosine 1-phosphate receptor signaling pathway. As to expression, widely expressed. Expressed in adult and fetal heart, brain, lung, liver, skeletal muscle and kidney. Expressed in adult pancreas and placenta and in fetal spleen and thymus.

The protein resides in the endoplasmic reticulum membrane. Functionally, plays an essential role in the homeostatic regulation of sphingolipid de novo biosynthesis by modulating the activity of the serine palmitoyltransferase (SPT) in response to ceramide levels. When complexed to SPT, the binding of ceramides to its N-terminus stabilizes a conformation that block SPT substrate entry, hence preventing SPT catalytic activity. Through this mechanism, maintains ceramide levels at sufficient concentrations for the production of complex sphingolipids, but which prevents the accumulation of ceramides to levels that trigger apoptosis. The chain is ORM1-like protein 3 (ORMDL3) from Homo sapiens (Human).